We begin with the raw amino-acid sequence, 88 residues long: Small ribosomal subunit protein uS17 (88 aa).

Belongs to the universal ribosomal protein uS17 family. Part of the 30S ribosomal subunit.

Its function is as follows. One of the primary rRNA binding proteins, it binds specifically to the 5'-end of 16S ribosomal RNA. This chain is Small ribosomal subunit protein uS17, found in Pseudomonas fluorescens (strain ATCC BAA-477 / NRRL B-23932 / Pf-5).